A 699-amino-acid polypeptide reads, in one-letter code: tRNA wybutosine-synthesizing protein 4 (699 aa).

S-adenosyl-L-methionine is bound by residues R94, G120, D151, 197–198 (DL), and E224.

It belongs to the methyltransferase superfamily. LCMT family.

It carries out the reaction 7-[(3S)-3-amino-3-carboxypropyl]wyosine(37) in tRNA(Phe) + S-adenosyl-L-methionine = 7-[(3S)-(3-amino-3-methoxycarbonyl)propyl]wyosine(37) in tRNA(Phe) + S-adenosyl-L-homocysteine. The catalysed reaction is 7-[(3S)-(3-amino-3-methoxycarbonyl)propyl]wyosine(37) in tRNA(Phe) + S-adenosyl-L-methionine + CO2 = wybutosine(37) in tRNA(Phe) + S-adenosyl-L-homocysteine + 2 H(+). It participates in tRNA modification; wybutosine-tRNA(Phe) biosynthesis. Its function is as follows. Probable S-adenosyl-L-methionine-dependent methyltransferase that acts as a component of the wybutosine biosynthesis pathway. Wybutosine is a hyper modified guanosine with a tricyclic base found at the 3'-position adjacent to the anticodon of eukaryotic phenylalanine tRNA. May methylate the carboxyl group of leucine residues to form alpha-leucine ester residues. The protein is tRNA wybutosine-synthesizing protein 4 (PPM2) of Eremothecium gossypii (strain ATCC 10895 / CBS 109.51 / FGSC 9923 / NRRL Y-1056) (Yeast).